A 440-amino-acid polypeptide reads, in one-letter code: MKNYLSIGVIALLFALTFGTVKSVQAIAGYGWLPDRPPINNSQLVVSMAGIVEGTDKKVFINFFEIDLTSQPAHGGKTEQGLSPKSKPFATDNGAMPHKLEKADLLKAIQKQLIANVHSNDGYFEVIDFASDATITDRNGKVYFADKDGSVTLPTQPVQEFLLKGHVRVRPYKEKPVQNQAKSVDVEYTVQFTPLNPDDDFRPGLKDTKLLKTLAIGDTITSQELLAQAQSILNKTHPGYTIYERDSSIVTHDNDIFRTILPMDQEFTYHVKNREQAYEINPKTGIKEKTNNTDLVSEKYYVLKQGEKPYDPFDRSHLKLFTIKYVDVNTNELLKSEQLLTASERNLDFRDLYDPRDKAKLLYNNLDAFDIMDYTLTGKVEDNHDKNNRVVTVYMGKRPKGAKGSYHLAYDKDLYTEEERKAYSYLRDTGTPIPDNPKDK.

The N-terminal stretch at 1 to 26 (MKNYLSIGVIALLFALTFGTVKSVQA) is a signal peptide.

In terms of biological role, this protein is not a protease, but it activates plasminogen by complexing with it. As a potential virulence factor, it is thought to prevent the formation of effective fibrin barriers around the site of infection, thereby contributing to the invasiveness of the cells. The chain is Streptokinase A (ska) from Streptococcus pyogenes serotype M1.